We begin with the raw amino-acid sequence, 653 residues long: Testicular spindle-associated protein SHCBP1L (653 aa).

The tract at residues 1–65 (MASGSKASVP…PVKGKAGRET (65 aa)) is disordered. The residue at position 8 (serine 8) is a Phosphoserine. A compositionally biased stretch (polar residues) spans 28–41 (SAVSGDTAAATTLK). Positions 46–56 (PVRSVVASPRP) are enriched in low complexity. Serine 53 is modified (phosphoserine). The stretch at 299–326 (IAQRFKKTLEKYKNKRVELIEYQSNIKE) forms a coiled coil. 4 PbH1 repeats span residues 493–514 (SGHMTLENCILKCEGTGVCVLT), 515–537 (GAALTITDSEITGAQGAGVELYP), 538–571 (GSIAILERNEIHHCNNLRTSNSSKSTLGGVNMKV), and 574–596 (APKLKMTNNHIYSNKGYGVSILQ). Position 570 is an N6-acetyllysine (lysine 570). Lysine 645 carries the post-translational modification N6-acetyllysine.

In terms of assembly, interacts with HSPA2; this interaction may promote the recruitment of HSPA2 to the spindle. Expressed in spermatocytes and elongating spermatids inside the seminiferous tubules (at protein level). Testis-specific.

It localises to the cytoplasm. The protein localises to the cytoskeleton. It is found in the spindle. Its function is as follows. Testis-specific spindle-associated factor that plays a role in spermatogenesis. In association with HSPA2, participates in the maintenance of spindle integrity during meiosis in male germ cells. The polypeptide is Testicular spindle-associated protein SHCBP1L (Homo sapiens (Human)).